The sequence spans 1254 residues: Structural polyprotein (1254 aa).

Positions 1 to 33 (MFPYQPMYPMQPMPFRNPFAAPRRPWFPRTDPF) are necessary for nucleocapsid assembly and virus assembly. Positions 33–68 (FLAMQVQELARSMANLTFKQRRDVPPEGPPAKKKKK) are host transcription inhibition. A Supraphysiological nuclear export signal motif is present at residues 41 to 48 (LARSMANL). The disordered stretch occupies residues 48 to 119 (LTFKQRRDVP…KPGKRQRMVM (72 aa)). The Nuclear localization signal signature appears at 64–68 (KKKKK). 2 stretches are compositionally biased toward basic residues: residues 79–93 (NGKKKNKLVKKKKKT) and 102–117 (GGKKKVNKKPGKRQRM). Residues 91–126 (KKTGPPPQKTNGGKKKVNKKPGKRQRMVMKLESDKT) form a binding to the viral RNA region. T93 carries the post-translational modification Phosphothreonine. The ribosome-binding stretch occupies residues 111–125 (PGKRQRMVMKLESDK). Position 123 is a phosphoserine (S123). The Peptidase S3 domain occupies 125–274 (KTFPIMLDGR…KYTPENSEQW (150 aa)). T126 is modified (phosphothreonine). The active-site Charge relay system is the H151. Residues 167–172 (KKASKY) are interaction with spike glycoprotein E2. Catalysis depends on charge relay system residues D173 and S225. Residues 259–263 (EKGVT) form an interaction with spike glycoprotein E2 region. The tract at residues 275-286 (SLVTTMCLLANV) is functions as an uncleaved signal peptide for the precursor of protein E3/E2. Residues 275–700 (SLVTTMCLLA…HYYHRYPMST (426 aa)) lie on the Extracellular side of the membrane. 7 disulfide bridges follow: C281/C290, C352/C456, C355/C360, C423/C437, C484/C599, C533/C559, and C535/C553. Residue N285 is glycosylated (N-linked (GlcNAc...) asparagine; by host). N-linked (GlcNAc...) asparagine; by host glycosylation occurs at N651. The chain crosses the membrane as a helical span at residues 701 to 721 (ILGLSICAAIVTTSIAASVWL). Topologically, residues 722-756 (FCKSRISCLTPYRLTPNARMPLCLAVLCCARTARA) are cytoplasmic. Positions 724–728 (KSRIS) are interaction with the capsid protein. S-palmitoyl cysteine; by host attachment occurs at residues C729, C749, and C750. Residues 729 to 749 (CLTPYRLTPNARMPLCLAVLC) form a transient transmembrane before p62-6K protein processing region. C729 and C750 form a disulfide bridge. Over 757–771 (ETTWESLDHLWNHNQ) the chain is Extracellular. The next 2 membrane-spanning stretches (helical) occupy residues 772–790 (QMFWSQLLIPLAALIVATR) and 791–811 (LLKCVCCVVPFLVVAGAVGAG). The Extracellular portion of the chain corresponds to 812-1224 (AYEHATTMPN…SKTAWTWLTS (413 aa)). Intrachain disulfides connect C861–C926, C874–C906, C875–C908, and C880–C890. The segment at 896 to 913 (VYPFMWGGAYCFCDTENT) is E1 fusion peptide loop. N-linked (GlcNAc...) asparagine; by host glycans are attached at residues N946 and N1082. 4 disulfide bridges follow: C1071-C1083, C1113-C1188, C1118-C1192, and C1140-C1182. The chain crosses the membrane as a helical span at residues 1225–1245 (LLGGSAIIIIIGLVLATIVAM). The Cytoplasmic portion of the chain corresponds to 1246-1254 (YVLTNQKHN).

As to quaternary structure, homodimer. Homomultimer. Interacts with host karyopherin KPNA4; this interaction allows the nuclear import of the viral capsid protein. Interacts with spike glycoprotein E2. Interacts with host IRAK1; the interaction leads to inhibition of IRAK1-dependent signaling. Part of a tetrameric complex composed of host CRM1, host importin alpha/beta dimer and the viral capsid; this complex blocks the receptor-mediated transport through the nuclear pore. Interacts with host phosphatase PPP1CA; this interaction dephosphorylates the capsid protein, which increases its ability to bind to the viral genome. In terms of assembly, the precursor of protein E3/E2 and E1 form a heterodimer shortly after synthesis. Interacts with spike glycoprotein E2. The precursor of protein E3/E2 and E1 form a heterodimer shortly after synthesis. Processing of the precursor of protein E3/E2 into E2 and E3 results in a heterodimer of the spike glycoproteins E2 and E1. Spike at virion surface are constituted of three E2-E1 heterodimers. After target cell attachment and endocytosis, E1 change conformation to form homotrimers. Interacts with 6K protein. Interacts with host LDLRAD3; this interaction mediates viral entry to the host cell. As to quaternary structure, interacts with spike glycoprotein E1. Processing of the precursor of protein E3/E2 into E2 and E3 results in a heterodimer of the spike glycoproteins E2 and E1. Spike at virion surface are constituted of a trimer of E2-E1 heterodimers. Interacts with 6K protein. Interacts with host LDLRAD3; this interaction mediates viral entry to the host cell. In terms of assembly, oligomer. Interacts with spike glycoprotein E1. Interacts with spike glycoprotein E2. Post-translationally, structural polyprotein: Specific enzymatic cleavages in vivo yield mature proteins. Capsid protein is auto-cleaved during polyprotein translation, unmasking a signal peptide at the N-terminus of the precursor of E3/E2. The remaining polyprotein is then targeted to the host endoplasmic reticulum, where host signal peptidase cleaves it into pE2, 6K and E1 proteins. pE2 is further processed to mature E3 and E2 by host furin in trans-Golgi vesicle. Phosphorylated on serine and threonine residues. In terms of processing, palmitoylated via thioester bonds. These palmitoylations may induce disruption of the C-terminus transmembrane. This would result in the reorientation of E2 C-terminus from lumenal to cytoplasmic side. Post-translationally, N-glycosylated. Palmitoylated via thioester bonds.

It is found in the virion. It localises to the host cytoplasm. Its subcellular location is the host cell membrane. The protein localises to the host nucleus. The protein resides in the virion membrane. It is found in the host Golgi apparatus. It localises to the host trans-Golgi network. Its subcellular location is the host endoplasmic reticulum. The catalysed reaction is Autocatalytic release of the core protein from the N-terminus of the togavirus structural polyprotein by hydrolysis of a -Trp-|-Ser- bond.. Its function is as follows. Forms an icosahedral capsid with a T=4 symmetry composed of 240 copies of the capsid protein surrounded by a lipid membrane through which penetrate 80 spikes composed of trimers of E1-E2 heterodimers. The capsid protein binds to the viral RNA genome at a site adjacent to a ribosome binding site for viral genome translation following genome release. Possesses a protease activity that results in its autocatalytic cleavage from the nascent structural protein. Following its self-cleavage, the capsid protein transiently associates with ribosomes, and within several minutes the protein binds to viral RNA and rapidly assembles into icosahedric core particles. The resulting nucleocapsid eventually associates with the cytoplasmic domain of the spike glycoprotein E2 at the cell membrane, leading to budding and formation of mature virions. In case of infection, new virions attach to target cells and after clathrin-mediated endocytosis their membrane fuses with the host endosomal membrane. This leads to the release of the nucleocapsid into the cytoplasm, followed by an uncoating event necessary for the genomic RNA to become accessible. The uncoating might be triggered by the interaction of capsid proteins with ribosomes. Binding of ribosomes would release the genomic RNA since the same region is genomic RNA-binding and ribosome-binding. Specifically inhibits interleukin-1 receptor-associated kinase 1/IRAK1-dependent signaling during viral entry, representing a means by which the alphaviruses may evade innate immune detection and activation prior to viral gene expression. Inhibits host transcription. Forms a tetrameric complex with XPO1/CRM1 and the nuclear import receptor importin. This complex blocks the central channel of host nuclear pores thereby inhibiting the receptor-mediated nuclear transport and thus the host mRNA and rRNA transcription. The inhibition of transcription is linked to a cytopathic effect on the host cell. Functionally, provides the signal sequence for the translocation of the precursor of protein E3/E2 to the host endoplasmic reticulum. Furin-cleaved E3 remains associated with spike glycoprotein E1 and mediates pH protection of the latter during the transport via the secretory pathway. After virion release from the host cell, the assembly protein E3 is gradually released in the extracellular space. In terms of biological role, plays a role in viral attachment to target host cell, by binding to the cell receptor LDLRAD3. Synthesized as a p62 precursor which is processed by furin at the cell membrane just before virion budding, giving rise to E2-E1 heterodimer. The p62-E1 heterodimer is stable, whereas E2-E1 is unstable and dissociate at low pH. p62 is processed at the last step, presumably to avoid E1 fusion activation before its final export to cell surface. E2 C-terminus contains a transitory transmembrane that would be disrupted by palmitoylation, resulting in reorientation of the C-terminal tail from lumenal to cytoplasmic side. This step is critical since E2 C-terminus is involved in budding by interacting with capsid proteins. This release of E2 C-terminus in cytoplasm occurs lately in protein export, and precludes premature assembly of particles at the endoplasmic reticulum membrane. Acts as a viroporin that participates in virus glycoprotein processing and transport to the plasma membrane, cell permeabilization and budding of viral particles. Disrupts the calcium homeostasis of the cell, probably at the endoplasmic reticulum level. This leads to cytoplasmic calcium elevation. Because of its lipophilic properties, the 6K protein is postulated to influence the selection of lipids that interact with the transmembrane domains of the glycoproteins, which, in turn, affects the deformability of the bilayer required for the extreme curvature that occurs as budding proceeds. Present in low amount in virions, about 3% compared to viral glycoproteins. Its function is as follows. Class II viral fusion protein. Fusion activity is inactive as long as E1 is bound to E2 in mature virion. After virus attachment to cell receptor LDLRAD3 and endocytosis, acidification of the endosome induce dissociation of E1/E2 heterodimer and concomitant trimerization of the E1 subunits. This E1 trimer is fusion active, and promotes release of viral nucleocapsid in cytoplasm after endosome and viral membrane fusion. Efficient fusion requires the presence of cholesterol and sphingolipid in the target membrane. This is Structural polyprotein from Venezuelan equine encephalitis virus (strain Mena II) (VEEV).